Consider the following 142-residue polypeptide: Universal stress protein G (142 aa).

It belongs to the universal stress protein A family.

The chain is Universal stress protein G (uspG) from Salmonella typhi.